The following is a 146-amino-acid chain: NADH-quinone oxidoreductase subunit A (146 aa).

Transmembrane regions (helical) follow at residues 14–34, 66–86, and 96–116; these read FAVFFVVAIGLCCLMLMGAFF, FYLVAMFFVIFDVEALYLYAW, and VGFIEAAIFILVLLAGLVYLV.

The protein belongs to the complex I subunit 3 family. NDH-1 is composed of 13 different subunits. Subunits NuoA, H, J, K, L, M, N constitute the membrane sector of the complex.

The protein localises to the cell inner membrane. It carries out the reaction a quinone + NADH + 5 H(+)(in) = a quinol + NAD(+) + 4 H(+)(out). NDH-1 shuttles electrons from NADH, via FMN and iron-sulfur (Fe-S) centers, to quinones in the respiratory chain. The immediate electron acceptor for the enzyme in this species is believed to be ubiquinone. Couples the redox reaction to proton translocation (for every two electrons transferred, four hydrogen ions are translocated across the cytoplasmic membrane), and thus conserves the redox energy in a proton gradient. This is NADH-quinone oxidoreductase subunit A from Serratia proteamaculans (strain 568).